A 488-amino-acid chain; its full sequence is Bifunctional pantoate ligase/cytidylate kinase (488 aa).

1-8 serves as a coordination point for ATP; sequence MGALHRAH. The segment at 1–251 is pantoate--beta-alanine ligase; sequence MGALHRAHGQ…CGETRLIDHT (251 aa). The active-site Proton donor is the His-8. (R)-pantoate is bound at residue Gln-36. A beta-alanine-binding site is contributed by Gln-36. ATP is bound at residue 125–128; sequence GEKD. Residue Gln-131 participates in (R)-pantoate binding. ATP contacts are provided by residues Val-154 and 162–165; that span reads CSSR. Residues 252–488 form a cytidylate kinase region; that stretch reads FLMSRQPIVA…PEEVWPTPGS (237 aa).

The protein in the N-terminal section; belongs to the pantothenate synthetase family. This sequence in the C-terminal section; belongs to the cytidylate kinase family. Type 1 subfamily.

It localises to the cytoplasm. The catalysed reaction is (R)-pantoate + beta-alanine + ATP = (R)-pantothenate + AMP + diphosphate + H(+). The enzyme catalyses CMP + ATP = CDP + ADP. It catalyses the reaction dCMP + ATP = dCDP + ADP. It participates in cofactor biosynthesis; (R)-pantothenate biosynthesis; (R)-pantothenate from (R)-pantoate and beta-alanine: step 1/1. Functionally, catalyzes the condensation of pantoate with beta-alanine in an ATP-dependent reaction via a pantoyl-adenylate intermediate. Catalyzes the transfer of a phosphate group from ATP to either CMP or dCMP to form CDP or dCDP and ADP, respectively. The sequence is that of Bifunctional pantoate ligase/cytidylate kinase from Prochlorococcus marinus (strain MIT 9303).